The following is a 319-amino-acid chain: ATP-dependent 6-phosphofructokinase (319 aa).

Residue G11 coordinates ATP. R21 to R25 provides a ligand contact to ADP. ATP is bound by residues R72–Y73 and G102–S105. Residue D103 coordinates Mg(2+). Residue T125–D127 coordinates substrate. The active-site Proton acceptor is the D127. Residue R154 coordinates ADP. Residues R162 and M169 to R171 each bind substrate. ADP contacts are provided by residues G185–D187 and K213–H215. Substrate-binding positions include E222, R243, and H249 to R252.

The protein belongs to the phosphofructokinase type A (PFKA) family. ATP-dependent PFK group I subfamily. Prokaryotic clade 'B1' sub-subfamily. In terms of assembly, homotetramer. Mg(2+) serves as cofactor.

The protein resides in the cytoplasm. It catalyses the reaction beta-D-fructose 6-phosphate + ATP = beta-D-fructose 1,6-bisphosphate + ADP + H(+). Its pathway is carbohydrate degradation; glycolysis; D-glyceraldehyde 3-phosphate and glycerone phosphate from D-glucose: step 3/4. With respect to regulation, allosterically activated by ADP and other diphosphonucleosides, and allosterically inhibited by phosphoenolpyruvate. The binding affinities for these effectors are decreased however, and therefore the allosteric effect becomes apparent only at high effector concentrations. In terms of biological role, catalyzes the phosphorylation of D-fructose 6-phosphate to fructose 1,6-bisphosphate by ATP, the first committing step of glycolysis. The polypeptide is ATP-dependent 6-phosphofructokinase (Lactobacillus delbrueckii subsp. bulgaricus).